Consider the following 185-residue polypeptide: DNA-directed RNA polymerase 21 kDa subunit (185 aa).

The protein belongs to the poxviridae DNA-directed RNA polymerase 22 kDa subunit family. As to quaternary structure, the DNA-dependent RNA polymerase used for intermediate and late genes expression consists of eight subunits Rpo30/OPG66, Rpo7/OPG90, Rpo22/OPG103, Rpo147/OPG105, Rpo18/OPG119, Rpo19/OPG131, Rpo132/OPG151 and Rpo35/OPG156. The same holoenzyme, with the addition of the transcription-specificity factor OPG109, is used for early gene expression.

It localises to the virion. The catalysed reaction is RNA(n) + a ribonucleoside 5'-triphosphate = RNA(n+1) + diphosphate. Part of the DNA-dependent RNA polymerase which catalyzes the transcription of viral DNA into RNA using the four ribonucleoside triphosphates as substrates. Responsible for the transcription of early, intermediate and late genes. DNA-dependent RNA polymerase associates with the early transcription factor (ETF), itself composed of OPG118 and OPG133, thereby allowing the early genes transcription. Late transcription, and probably also intermediate transcription, require newly synthesized RNA polymerase. The protein is DNA-directed RNA polymerase 21 kDa subunit (OPG103) of Oryctolagus cuniculus (Rabbit).